A 1315-amino-acid polypeptide reads, in one-letter code: MDSQGLKTLINYYCQERYYHHVLLVASEGMKKYSSDPVFRFYHAYGTLMEGKAQEALREFEAIKNKQDVSLCSLMALMYVHKMSPNPDREAILELDTKMKEQRKEAGRKALYHAGLFLWHIGRHDKAREYIDRMSKMPHDSNEGPILKAWLDITRGKEPYAKKALRYFEEGLQDGNDIFALLGKVLCLEIRQNYSGALETVSQIIVNFPSFLPAFEKKMKLQLALQDWDQTVETAQRLLLQDNHNVEALRMLALYYLCREGDVEKAATKLENLGNALDVMEPQNAQLFYKITLAFSRTCGRNQLILQKVQSFLEKAFSLTPQQAEIATELGYQMILQGKVKEAWKWYRTAMTLNESNISAVTGLIRCQLIEGQLQDADQQLEFFSEFQQSMGKSAELMYLHAVLATKKNNRQDEVINLLNDVVNTHFSHLEDLPLGIQYFEKLNPDFLLEVVTEYLNLCPIQPAGPGQPLSPVLRRCSSVLETIIRSVPGLPQAVFLMAKVKYLSGDTEAAYNNLQHCLEHSPSYAEAHLLMAQVYLSQDKVKLCSQSLELCLSYNFNVREYPLYHLIKAQSQKKMGEVAEAIKTLHMAMNLPGMRRSRASSKSKHRTEVDASHRLSIFLELVEVHRLNGEQHEAAKVLQDAIHEFSGTCEELRVTIANADLALAQGDTDRALSMLRNVTTEQPYFIEAKEKMADIYLKHRKEKMLYITCYREIAERMPSPRSFLLLGDAYMNIQEPEEAIVAYEQALNQNPKDGTLARKIGKALVKTHNYSKAITYYEAALKSGQQNCLCYDLAELLLRLKLYEKAEKVLQHSLAHEPVSELSALMVDGRSQVLLAKVYSKMERPSDAIAALQQARELQARILKRVQMEQPDAVPSQKHFAAEICAEIAKHSAAQRDYEKAITFYREALVHCETDSKIMLELAQLYLAQEDLDASLRHCALLLQRDQDNEPATMLMADLMFRKQDYEQAVYHLQQLLDRKPDNFMTLSRLIDLLRRCGKLEDVPRFFLMAEKHNSRTKLEPGFQYCKGLHFWYTGEPNDALRHFNKARKDSDWGQNALYNMIEICLNPDNETIGGEVFENLNGDLGTSPEKQESVQLAVRTAEKLLKELKPQTVQGRLQLRIMENCCLMATKQKSSVEQALNTFTEIAASEKDHIPALLGMATAYMILKQTPKARNQLKRIAKMPWNPIEAEDLEKSWLLLADIYIQSAKYDMAEELLKRCLCHNRSCCKAYEYMGYIMEKEQAYTDAAFNYEMAWKHSNQTNPAVGYKLAFNYLKAKRYVDAIDVCHQVLEAHPTYPKIRKDILDKARASLRP.

TPR repeat units follow at residues 108 to 141 (RKALYHAGLFLWHIGRHDKAREYIDRMSKMPHDS), 145 to 178 (PILKAWLDITRGKEPYAKKALRYFEEGLQDGNDI), 192 to 225 (QNYSGALETVSQIIVNFPSFLPAFEKKMKLQLAL), 285 to 323 (AQLFYKITLAFSRTCGRNQLILQKVQSFLEKAFSLTPQQ), 324 to 357 (AEIATELGYQMILQGKVKEAWKWYRTAMTLNESN), 492 to 525 (PQAVFLMAKVKYLSGDTEAAYNNLQHCLEHSPSY), 563 to 596 (PLYHLIKAQSQKKMGEVAEAIKTLHMAMNLPGMR), 616 to 649 (LSIFLELVEVHRLNGEQHEAAKVLQDAIHEFSGT), 721 to 754 (PRSFLLLGDAYMNIQEPEEAIVAYEQALNQNPKD), 756 to 788 (TLARKIGKALVKTHNYSKAITYYEAALKSGQQN), 790 to 821 (LCYDLAELLLRLKLYEKAEKVLQHSLAHEPVS), 830 to 863 (GRSQVLLAKVYSKMERPSDAIAALQQARELQARI), 883 to 916 (AEICAEIAKHSAAQRDYEKAITFYREALVHCETD), 918 to 950 (KIMLELAQLYLAQEDLDASLRHCALLLQRDQDN), 951 to 984 (EPATMLMADLMFRKQDYEQAVYHLQQLLDRKPDN), 1022 to 1055 (PGFQYCKGLHFWYTGEPNDALRHFNKARKDSDWG), 1196 to 1229 (EKSWLLLADIYIQSAKYDMAEELLKRCLCHNRSC), 1231 to 1263 (KAYEYMGYIMEKEQAYTDAAFNYEMAWKHSNQT), and 1265 to 1298 (PAVGYKLAFNYLKAKRYVDAIDVCHQVLEAHPTY).

Belongs to the TTC21 family. Component of the IFT complex A (IFT-A) complex. IFT-A complex is divided into a core subcomplex composed of IFT122:IFT140:WDR19 which is associated with TULP3 and a peripheral subcomplex composed of IFT43:WDR35:TTC21B. Interacts directy with WDR35 and TTC21B. Interacts with TTC25.

The protein localises to the cytoplasm. It localises to the cytoskeleton. It is found in the cilium axoneme. In terms of biological role, component of the IFT complex A (IFT-A), a complex required for retrograde ciliary transport and entry into cilia of G protein-coupled receptors (GPCRs). Essential for retrograde trafficking of IFT-1, IFT-B and GPCRs. Negatively modulates the SHH signal transduction. The polypeptide is Tetratricopeptide repeat protein 21B (Ttc21b) (Mus musculus (Mouse)).